A 1199-amino-acid chain; its full sequence is DNA-directed RNA polymerase subunit beta' (1199 aa).

The Zn(2+) site is built by C60, C62, C75, and C78. Positions 449, 451, and 453 each coordinate Mg(2+). C818, C892, C899, and C902 together coordinate Zn(2+).

It belongs to the RNA polymerase beta' chain family. The RNAP catalytic core consists of 2 alpha, 1 beta, 1 beta' and 1 omega subunit. When a sigma factor is associated with the core the holoenzyme is formed, which can initiate transcription. The cofactor is Mg(2+). It depends on Zn(2+) as a cofactor.

The enzyme catalyses RNA(n) + a ribonucleoside 5'-triphosphate = RNA(n+1) + diphosphate. DNA-dependent RNA polymerase catalyzes the transcription of DNA into RNA using the four ribonucleoside triphosphates as substrates. This is DNA-directed RNA polymerase subunit beta' from Bacillus velezensis (strain DSM 23117 / BGSC 10A6 / LMG 26770 / FZB42) (Bacillus amyloliquefaciens subsp. plantarum).